The following is a 148-amino-acid chain: Small ribosomal subunit protein bS6 (148 aa).

The disordered stretch occupies residues 96–148 (HEEGQSAMLTRRDDRRERDGDDRPRRREGGFDRGDRGDRGPRRPRDNEAGEGA).

Belongs to the bacterial ribosomal protein bS6 family.

Functionally, binds together with bS18 to 16S ribosomal RNA. This Brucella abortus biovar 1 (strain 9-941) protein is Small ribosomal subunit protein bS6.